Here is a 1633-residue protein sequence, read N- to C-terminus: Laminin-like protein lam-2 (1633 aa).

An N-terminal signal peptide occupies residues 1–19 (MTSILWLFSLAVLWHMGQP). The region spanning 47 to 286 (QPQRCVPDFV…AISDFAVGGR (240 aa)) is the Laminin N-terminal domain. Residues N116 and N136 are each glycosylated (N-linked (GlcNAc...) asparagine). 16 disulfides stabilise this stretch: C287–C296, C289–C310, C312–C321, C324–C344, C347–C356, C349–C372, C375–C384, C387–C400, C403–C415, C405–C421, C423–C432, C435–C447, C450–C464, C452–C471, C473–C482, and C485–C500. Laminin EGF-like domains are found at residues 287–346 (CKCN…ECIA), 347–402 (CNCS…YCVA), 403–449 (CGCN…GCKN), and 450–502 (CGCE…GCTP). Residue N348 is glycosylated (N-linked (GlcNAc...) asparagine). A Laminin EGF-like 5; first part domain is found at 503-512 (CFCFGHSSIC). N-linked (GlcNAc...) asparagine glycosylation is found at N522, N658, and N740. The region spanning 529-701 (QDKQKWAGQN…NPKQATWIEH (173 aa)) is the Laminin IV type A domain. The Laminin EGF-like 5; second part domain maps to 702-747 (CECLPGFVGQFCESCESGFRRETKFGGPFNHCIKCDCHNHSNSCEA). Disulfide bonds link C736–C745, C738–C752, C754–C763, C766–C782, C785–C803, C806–C815, C818–C832, C835–C849, C837–C856, C859–C868, C871–C887, C890–C909, C892–C916, C918–C927, C930–C943, C946–C958, C948–C965, C967–C976, C979–C991, C994–C1006, C996–C1013, C1015–C1024, and C1027–C1038. In terms of domain architecture, Laminin EGF-like 6; truncated spans 752–784 (CICEHNTAGDTCERCARGYYGDALQGTEEDCQK). Laminin EGF-like domains are found at residues 785–834 (CPCP…ECVE), 835–889 (CACS…NCQS), 890–945 (CGCF…GCQE), 946–993 (CNCD…GCQP), and 994–1040 (CDCE…GCLP). The N-linked (GlcNAc...) asparagine glycan is linked to N936. N-linked (GlcNAc...) asparagine glycosylation is found at N1077, N1183, N1226, N1259, N1336, N1452, and N1528.

Functionally, during the formation of neuromuscular junctions at the larval stage, negatively regulates membrane protrusion from body wall muscles, probably downstream of the integrin complex formed by pat-2 and pat-3. The sequence is that of Laminin-like protein lam-2 (lam-2) from Caenorhabditis elegans.